Consider the following 979-residue polypeptide: Ankycorbin (979 aa).

Position 1 is an N-acetylmethionine (Met-1). Position 11 is a phosphoserine (Ser-11). 7 ANK repeats span residues 18-51 (KNDDRLLQAVENGDAEKVASLLGKKGASATKHDS), 52-81 (EGKTAFHLAAAKGHVECLKVMVTHGVDVTA), 85-114 (SGHSALHVAAKNGHPECIRKLLQYKSPAEN), 118-147 (SGKTALHYAAAQGCLQAVQLLCEHKSPINL), 151-180 (DGNIPLLVAVQNGHSEACHFLLDHGADVNS), 184-213 (NGRTALMLACETGSSNTVDALIKKGADLSL), and 217-247 (LGHNALHYSKLSENAGIQNLLLSKISQDADL). The span at 247–259 (LKTPTKPKQHDQV) shows a compositional bias: basic and acidic residues. The tract at residues 247 to 299 (LKTPTKPKQHDQVSKISSERSGTPKKRKAPPPPISPTQLSDVSSPRSITSTPL) is disordered. Thr-249 carries the phosphothreonine modification. The Nuclear localization signal motif lies at 270-276 (PKKRKAP). 3 positions are modified to phosphoserine: Ser-281, Ser-286, and Ser-293. Polar residues predominate over residues 282 to 299 (PTQLSDVSSPRSITSTPL). Thr-295 and Thr-297 each carry phosphothreonine. Residues Ser-300, Ser-304, Ser-318, Ser-327, Ser-329, Ser-340, Ser-341, and Ser-358 each carry the phosphoserine modification. The stretch at 349–374 (LVLLQAKVASLTLHNKELQDKLQAKS) forms a coiled coil. 2 disordered regions span residues 392–429 (TQTDLAPSPGKASDIPSSDAKSSPPVEHPAGTSTTDND) and 446–467 (LESSEAEKKQLQDELQSQRTDT). Positions 430-943 (VIIRQLQDSL…CKKHHQEVIS (514 aa)) form a coiled coil. Positions 446–457 (LESSEAEKKQLQ) are enriched in basic and acidic residues. The segment covering 458-467 (DELQSQRTDT) has biased composition (polar residues). A phosphoserine mark is found at Ser-513, Ser-516, Ser-667, Ser-694, and Ser-914.

In terms of assembly, interacts with PALLD. Associates with actin. However, does not bind F-actin directly. Highly expressed in testis, where it localizes to seminiferous tubules (at protein level). Expressed in ganglion cell layer and in Muller cell fibers of the retina (at protein level). In small intestine highly expressed at the apical and lateral borders of absorptive epithelia (at protein level). In liver highly expressed along the bile canaliculi (at protein level).

The protein localises to the cytoplasm. It is found in the cytoskeleton. The protein resides in the stress fiber. It localises to the cell cortex. Its subcellular location is the cell junction. The protein localises to the nucleus. In terms of biological role, plays a role in actin regulation at the ectoplasmic specialization, a type of cell junction specific to testis. Important for establishment of sperm polarity and normal spermatid adhesion. May also promote integrity of Sertoli cell tight junctions at the blood-testis barrier. The sequence is that of Ankycorbin (Rai14) from Mus musculus (Mouse).